We begin with the raw amino-acid sequence, 209 residues long: MPDFSIENEISKSINKKNCIIVGVDEVGYGSLAGPVVSAASFFLRHDNEIIYNIKDSKKLTPKKRIEVYNTITSIVKWSIGFADVYEIDQHNILNATHLAMQRALNGLNCDIDYVIVDGNKVPDLPWNRKAIVDGDNISVSIAAASIIAKVTRDKLMETLHTQYPEYQWNKNKGYGTKHHLESLYKYGKTIHHRNTFAPLPGITKLYSK.

In terms of domain architecture, RNase H type-2 spans 19 to 209 (CIIVGVDEVG…LPGITKLYSK (191 aa)). The a divalent metal cation site is built by aspartate 25, glutamate 26, and aspartate 118.

It belongs to the RNase HII family. The cofactor is Mn(2+). Mg(2+) is required as a cofactor.

Its subcellular location is the cytoplasm. It carries out the reaction Endonucleolytic cleavage to 5'-phosphomonoester.. In terms of biological role, endonuclease that specifically degrades the RNA of RNA-DNA hybrids. In Ehrlichia canis (strain Jake), this protein is Ribonuclease HII.